An 819-amino-acid chain; its full sequence is Eukaryotic translation initiation factor 3 subunit C (819 aa).

Residues 1–106 (MSRFFLKTYE…DSSDEEDGKK (106 aa)) are disordered. Acidic residues-rich tracts occupy residues 17 to 41 (GEEEDLLSQSEEDLVSSSSEEELSD) and 47 to 59 (DSDESSDNDEDND). Residues 620–795 (FHQHINLDLI…EYIIFERGEE (176 aa)) enclose the PCI domain.

This sequence belongs to the eIF-3 subunit C family. As to quaternary structure, component of the eukaryotic translation initiation factor 3 (eIF-3) complex.

The protein localises to the cytoplasm. In terms of biological role, component of the eukaryotic translation initiation factor 3 (eIF-3) complex, which is involved in protein synthesis of a specialized repertoire of mRNAs and, together with other initiation factors, stimulates binding of mRNA and methionyl-tRNAi to the 40S ribosome. The eIF-3 complex specifically targets and initiates translation of a subset of mRNAs involved in cell proliferation. The chain is Eukaryotic translation initiation factor 3 subunit C from Kluyveromyces lactis (strain ATCC 8585 / CBS 2359 / DSM 70799 / NBRC 1267 / NRRL Y-1140 / WM37) (Yeast).